We begin with the raw amino-acid sequence, 200 residues long: 3-isopropylmalate dehydratase small subunit (200 aa).

This sequence belongs to the LeuD family. LeuD type 1 subfamily. As to quaternary structure, heterodimer of LeuC and LeuD.

The catalysed reaction is (2R,3S)-3-isopropylmalate = (2S)-2-isopropylmalate. The protein operates within amino-acid biosynthesis; L-leucine biosynthesis; L-leucine from 3-methyl-2-oxobutanoate: step 2/4. In terms of biological role, catalyzes the isomerization between 2-isopropylmalate and 3-isopropylmalate, via the formation of 2-isopropylmaleate. The sequence is that of 3-isopropylmalate dehydratase small subunit from Sodalis glossinidius (strain morsitans).